A 282-amino-acid polypeptide reads, in one-letter code: Nucleotide-binding protein PXO_02223 (282 aa).

5–12 (GLSGSGKS) lines the ATP pocket. 57 to 60 (DVRS) provides a ligand contact to GTP.

It belongs to the RapZ-like family.

Displays ATPase and GTPase activities. This chain is Nucleotide-binding protein PXO_02223, found in Xanthomonas oryzae pv. oryzae (strain PXO99A).